Reading from the N-terminus, the 204-residue chain is uncharacterized protein (204 aa).

The next 6 helical transmembrane spans lie at 19-39, 42-62, 78-98, 116-136, 143-163, and 167-187; these read TANPAPLGLLGFGITTILLNL, AGLFPINSMILAMGFAYGGIA, GTVAFGSYGLFWWSLVLLLVI, PVAMASYLFMWGLFTLLMFIA, GIQVIFISLAVLFFLLTAGEI, and ALITAVAGYEGIFTGAAAMYV.

Belongs to the acetate uptake transporter (AceTr) (TC 2.A.96) family.

The protein resides in the cell membrane. This is an uncharacterized protein from Methanothermobacter thermautotrophicus (strain ATCC 29096 / DSM 1053 / JCM 10044 / NBRC 100330 / Delta H) (Methanobacterium thermoautotrophicum).